Reading from the N-terminus, the 235-residue chain is Chalcone--flavanone isomerase 2 (235 aa).

Positions 50 and 192 each coordinate substrate.

It belongs to the chalcone isomerase family.

It carries out the reaction a chalcone = a flavanone.. It functions in the pathway secondary metabolite biosynthesis; flavonoid biosynthesis. Its function is as follows. Catalyzes the intramolecular cyclization of bicyclic chalcones into tricyclic (S)-flavanones. Responsible for the isomerization of 4,2',4',6'-tetrahydroxychalcone (also termed chalcone) into naringenin. In Chrysanthemum morifolium (Florist's daisy), this protein is Chalcone--flavanone isomerase 2 (CHI2).